A 292-amino-acid chain; its full sequence is Porphobilinogen deaminase (292 aa).

Cys235 carries the post-translational modification S-(dipyrrolylmethanemethyl)cysteine.

It belongs to the HMBS family. In terms of assembly, monomer. Dipyrromethane serves as cofactor.

It catalyses the reaction 4 porphobilinogen + H2O = hydroxymethylbilane + 4 NH4(+). It participates in porphyrin-containing compound metabolism; protoporphyrin-IX biosynthesis; coproporphyrinogen-III from 5-aminolevulinate: step 2/4. In terms of biological role, tetrapolymerization of the monopyrrole PBG into the hydroxymethylbilane pre-uroporphyrinogen in several discrete steps. This is Porphobilinogen deaminase from Acetivibrio thermocellus (strain ATCC 27405 / DSM 1237 / JCM 9322 / NBRC 103400 / NCIMB 10682 / NRRL B-4536 / VPI 7372) (Clostridium thermocellum).